The primary structure comprises 353 residues: Putrescine N-methyltransferase 2 (353 aa).

The tract at residues 15-50 (KSGAIPMNGHHNGTSKHQNGHKNGTSEQQNGTISLD) is disordered. Over residues 25–50 (HNGTSKHQNGHKNGTSEQQNGTISLD) the composition is skewed to polar residues. Positions 64–301 (PGWFSEFSAL…GVIGYMLCST (238 aa)) constitute a PABS domain. Residues Q95, E170, and 201–202 (DG) contribute to the S-adenosyl-L-methionine site. The active-site Proton acceptor is D220. Y289 serves as a coordination point for S-adenosyl-L-methionine.

It belongs to the class I-like SAM-binding methyltransferase superfamily. Putrescine methyltransferase family. In terms of tissue distribution, predominantly expressed in roots.

The catalysed reaction is putrescine + S-adenosyl-L-methionine = N-methylputrescine + S-adenosyl-L-homocysteine + H(+). It participates in alkaloid biosynthesis; nicotine biosynthesis. In terms of biological role, involved in the biosynthesis of pyridine alkaloid natural products, leading mainly to the production of anabasine, anatabine, nicotine and nornicotine, effective deterrents against herbivores with antiparasitic and pesticide properties (neurotoxins); nornicotine serves as the precursor in the synthesis of the carcinogen compound N'-nitrosonornicotine (NNN). Methyltransferase that mediates the conversion of putrescine to N-methylputrescine. Promotes leaves ripening. The polypeptide is Putrescine N-methyltransferase 2 (Nicotiana tabacum (Common tobacco)).